A 102-amino-acid polypeptide reads, in one-letter code: Small ribosomal subunit protein uS10 (102 aa).

This sequence belongs to the universal ribosomal protein uS10 family. Part of the 30S ribosomal subunit.

Involved in the binding of tRNA to the ribosomes. The sequence is that of Small ribosomal subunit protein uS10 from Parvibaculum lavamentivorans (strain DS-1 / DSM 13023 / NCIMB 13966).